A 448-amino-acid polypeptide reads, in one-letter code: MNKIRVRYAPSPTGFLHIGNARTALFNYLFAKHHQGDFILRIEDTDLLRNVADGEASQLKNLRWLGIDWKEGPDINGPFGPYRQSERLTIYQKYAFELLEKNLAYRDFEKDKKNFAIRFKVPPNQTFTFCDLIRGKLTFLSKEIEDWVIIKSNGYPSYNFAASIDDHLMQISHIFRGEEHITNTPKQIMIYQSFNWSIPKFAHMTLILNQERKKLSKRDVNVCQFIQDYADLGYLPQSLFNFLSLLGFSPSSCKEILTPQEIISLFDVNRLNKSPAIFDKTKLDFFNNHYLRKTPIDDIVSFIKTKLDFFEVLPINNQKWLTKFILLFQERINYIKQLKDLYHHFFDKNTSLSEEVEQFLKKHDCALSVLTLFYHKLNLVVFEKEAINPIIAEIAQNMKINKKNLFVILRIGATHKMQGPSLALFLELLGKKQVLNNLSKIVELLKNQ.

The 'HIGH' region signature appears at 10–20 (PSPTGFLHIGN). Positions 214–218 (KLSKR) match the 'KMSKS' region motif. Residue Lys217 participates in ATP binding.

It belongs to the class-I aminoacyl-tRNA synthetase family. Glutamate--tRNA ligase type 1 subfamily. As to quaternary structure, monomer.

The protein localises to the cytoplasm. The enzyme catalyses tRNA(Glu) + L-glutamate + ATP = L-glutamyl-tRNA(Glu) + AMP + diphosphate. Its function is as follows. Catalyzes the attachment of glutamate to tRNA(Glu) in a two-step reaction: glutamate is first activated by ATP to form Glu-AMP and then transferred to the acceptor end of tRNA(Glu). The sequence is that of Glutamate--tRNA ligase from Phytoplasma australiense.